A 212-amino-acid polypeptide reads, in one-letter code: Uridine kinase (212 aa).

13–20 (GASASGKS) lines the ATP pocket.

The protein belongs to the uridine kinase family.

Its subcellular location is the cytoplasm. The enzyme catalyses uridine + ATP = UMP + ADP + H(+). It carries out the reaction cytidine + ATP = CMP + ADP + H(+). It functions in the pathway pyrimidine metabolism; CTP biosynthesis via salvage pathway; CTP from cytidine: step 1/3. Its pathway is pyrimidine metabolism; UMP biosynthesis via salvage pathway; UMP from uridine: step 1/1. This is Uridine kinase from Shewanella halifaxensis (strain HAW-EB4).